We begin with the raw amino-acid sequence, 263 residues long: Tryptophan synthase alpha chain (263 aa).

Catalysis depends on proton acceptor residues E51 and D62.

Belongs to the TrpA family. As to quaternary structure, tetramer of two alpha and two beta chains.

It catalyses the reaction (1S,2R)-1-C-(indol-3-yl)glycerol 3-phosphate + L-serine = D-glyceraldehyde 3-phosphate + L-tryptophan + H2O. It functions in the pathway amino-acid biosynthesis; L-tryptophan biosynthesis; L-tryptophan from chorismate: step 5/5. The alpha subunit is responsible for the aldol cleavage of indoleglycerol phosphate to indole and glyceraldehyde 3-phosphate. The chain is Tryptophan synthase alpha chain from Methanosarcina barkeri (strain Fusaro / DSM 804).